We begin with the raw amino-acid sequence, 311 residues long: Acetyl-coenzyme A carboxylase carboxyl transferase subunit alpha (311 aa).

The region spanning 36-286 is the CoA carboxyltransferase C-terminal domain; it reads NLSKEISKVY…ANYFISELAE (251 aa).

It belongs to the AccA family. Acetyl-CoA carboxylase is a heterohexamer composed of biotin carboxyl carrier protein (AccB), biotin carboxylase (AccC) and two subunits each of ACCase subunit alpha (AccA) and ACCase subunit beta (AccD).

It localises to the cytoplasm. It catalyses the reaction N(6)-carboxybiotinyl-L-lysyl-[protein] + acetyl-CoA = N(6)-biotinyl-L-lysyl-[protein] + malonyl-CoA. It participates in lipid metabolism; malonyl-CoA biosynthesis; malonyl-CoA from acetyl-CoA: step 1/1. Functionally, component of the acetyl coenzyme A carboxylase (ACC) complex. First, biotin carboxylase catalyzes the carboxylation of biotin on its carrier protein (BCCP) and then the CO(2) group is transferred by the carboxyltransferase to acetyl-CoA to form malonyl-CoA. The sequence is that of Acetyl-coenzyme A carboxylase carboxyl transferase subunit alpha from Campylobacter concisus (strain 13826).